We begin with the raw amino-acid sequence, 411 residues long: Endo-1,4-beta-xylanase A (411 aa).

An N-terminal signal peptide occupies residues 1–33 (MKKFKIRKLMARVLALALVFSTFFMVSKVDANA). The 349-residue stretch at 34–382 (ASYNLMETYG…KPAYDEVVKA (349 aa)) folds into the GH10 domain. Glutamate 201 acts as the Proton donor in catalysis. Catalysis depends on glutamate 311, which acts as the Nucleophile. The interval 387–411 (FGNPGSFTPQPTITPQPTPTPSGQT) is disordered. Residues 398-411 (TITPQPTPTPSGQT) are compositionally biased toward pro residues.

It belongs to the glycosyl hydrolase 10 (cellulase F) family.

The catalysed reaction is Endohydrolysis of (1-&gt;4)-beta-D-xylosidic linkages in xylans.. It functions in the pathway glycan degradation; xylan degradation. Its function is as follows. B.fibrisolvens is located in the rumen of ruminant animals, where it contributes to the animal's digestion of plant material by hydrolyzing hemicellulose with its xylanases. This chain is Endo-1,4-beta-xylanase A (xynA), found in Butyrivibrio fibrisolvens.